The primary structure comprises 357 residues: UDP-N-acetylglucosamine--N-acetylmuramyl-(pentapeptide) pyrophosphoryl-undecaprenol N-acetylglucosamine transferase (357 aa).

UDP-N-acetyl-alpha-D-glucosamine-binding positions include 12 to 14 (TAG), Arg166, Ser196, and Gln291.

Belongs to the glycosyltransferase 28 family. MurG subfamily.

It is found in the cell membrane. The enzyme catalyses di-trans,octa-cis-undecaprenyl diphospho-N-acetyl-alpha-D-muramoyl-L-alanyl-D-glutamyl-meso-2,6-diaminopimeloyl-D-alanyl-D-alanine + UDP-N-acetyl-alpha-D-glucosamine = di-trans,octa-cis-undecaprenyl diphospho-[N-acetyl-alpha-D-glucosaminyl-(1-&gt;4)]-N-acetyl-alpha-D-muramoyl-L-alanyl-D-glutamyl-meso-2,6-diaminopimeloyl-D-alanyl-D-alanine + UDP + H(+). The protein operates within cell wall biogenesis; peptidoglycan biosynthesis. Its function is as follows. Cell wall formation. Catalyzes the transfer of a GlcNAc subunit on undecaprenyl-pyrophosphoryl-MurNAc-pentapeptide (lipid intermediate I) to form undecaprenyl-pyrophosphoryl-MurNAc-(pentapeptide)GlcNAc (lipid intermediate II). In Geobacillus kaustophilus (strain HTA426), this protein is UDP-N-acetylglucosamine--N-acetylmuramyl-(pentapeptide) pyrophosphoryl-undecaprenol N-acetylglucosamine transferase.